We begin with the raw amino-acid sequence, 357 residues long: Arginine kinase (357 aa).

N-acetylalanine is present on alanine 2. The Phosphagen kinase N-terminal domain occupies lysine 9–lysine 91. Glycine 64–tyrosine 68 contacts L-arginine. The Phosphagen kinase C-terminal domain occupies phenylalanine 119–methionine 356. ATP-binding positions include serine 122–arginine 126 and histidine 185. L-arginine is bound at residue glutamate 225. Arginine 229 lines the ATP pocket. Cysteine 271 contacts L-arginine. ATP-binding positions include arginine 280 to histidine 284 and arginine 309 to glutamate 314. Glutamate 314 is a binding site for L-arginine.

Belongs to the ATP:guanido phosphotransferase family.

The enzyme catalyses L-arginine + ATP = N(omega)-phospho-L-arginine + ADP + H(+). The protein is Arginine kinase of Pachygrapsus marmoratus (Marbled rock crab).